Consider the following 76-residue polypeptide: Omega-conotoxin-like TxMKLT1-0141 (76 aa).

An N-terminal signal peptide occupies residues 1-22 (MKLTCMMIVAVLFLTAWTFATA). Residues 23-50 (DDSSNGLENLFPKAHHEMKNPEASKLNE) constitute a propeptide that is removed on maturation. Intrachain disulfides connect C52–C67, C59–C70, and C66–C75.

Belongs to the conotoxin O1 superfamily. As to expression, expressed by the venom duct.

The protein localises to the secreted. In terms of biological role, omega-conotoxins act at presynaptic membranes, they bind and block voltage-gated calcium channels (Cav). The chain is Omega-conotoxin-like TxMKLT1-0141 from Conus textile (Cloth-of-gold cone).